Here is a 210-residue protein sequence, read N- to C-terminus: Regulatory protein RecX (210 aa).

Positions 28-47 (SRRQEEGAASSLFDREAEEK) are disordered.

Belongs to the RecX family.

The protein localises to the cytoplasm. Functionally, modulates RecA activity. This Corynebacterium efficiens (strain DSM 44549 / YS-314 / AJ 12310 / JCM 11189 / NBRC 100395) protein is Regulatory protein RecX.